The following is a 982-amino-acid chain: Probable DNA-directed RNA polymerase (982 aa).

It belongs to the RNA polymerase beta chain family.

The enzyme catalyses RNA(n) + a ribonucleoside 5'-triphosphate = RNA(n+1) + diphosphate. In terms of biological role, the presence of the two linear plasmids, termed pGKL1 and pGKL2, in strains of Kluyveromyces lactis confers the killer phenotype to the host cell, by promoting the secretion of a toxin able to inhibit the growth of sensitive strains. The sequence is that of Probable DNA-directed RNA polymerase from Kluyveromyces lactis (strain ATCC 8585 / CBS 2359 / DSM 70799 / NBRC 1267 / NRRL Y-1140 / WM37) (Yeast).